The primary structure comprises 267 residues: MTKNKIGVFGANGRMGSALLEAASTKEHSELAAAYVRSSSPLLGINVNQLNSAADKTVTFSDEANITNVDVLIDFTLPAGMRTHLQTAVKQGVPMVIGTTGLNEADMTLLHEAANHIPIVFARNYSVGVNVLLNLVQTAATKFGDDMDIEIFEAHHRHKIDAPSGTALAIGEAIADAKGWDHDKVAVYDRSKVEQAKSQNEIGYSVLRGGDIVGEHTAYFATMGERLELTHKASSRMTFALGAIRAAGWLINKPAGLYDMQDVLDLK.

10–15 (GANGRM) contacts NAD(+). Arg-37 is a binding site for NADP(+). NAD(+) is bound by residues 98–100 (GTT) and 122–125 (ARNY). His-155 functions as the Proton donor/acceptor in the catalytic mechanism. His-156 is a binding site for (S)-2,3,4,5-tetrahydrodipicolinate. The active-site Proton donor is Lys-159. 165-166 (GT) is a binding site for (S)-2,3,4,5-tetrahydrodipicolinate.

It belongs to the DapB family.

The protein resides in the cytoplasm. The enzyme catalyses (S)-2,3,4,5-tetrahydrodipicolinate + NAD(+) + H2O = (2S,4S)-4-hydroxy-2,3,4,5-tetrahydrodipicolinate + NADH + H(+). The catalysed reaction is (S)-2,3,4,5-tetrahydrodipicolinate + NADP(+) + H2O = (2S,4S)-4-hydroxy-2,3,4,5-tetrahydrodipicolinate + NADPH + H(+). Its pathway is amino-acid biosynthesis; L-lysine biosynthesis via DAP pathway; (S)-tetrahydrodipicolinate from L-aspartate: step 4/4. Its function is as follows. Catalyzes the conversion of 4-hydroxy-tetrahydrodipicolinate (HTPA) to tetrahydrodipicolinate. This Pseudoalteromonas translucida (strain TAC 125) protein is 4-hydroxy-tetrahydrodipicolinate reductase.